The primary structure comprises 446 residues: Tubulin beta-4 chain (446 aa).

Residues Gln-11, Glu-69, Ser-138, Gly-142, Thr-143, Gly-144, Asn-204, and Asn-226 each contribute to the GTP site. Glu-69 contacts Mg(2+). The span at 417 to 426 (DLVSEYQQYQ) shows a compositional bias: polar residues. Residues 417–446 (DLVSEYQQYQDATADEEGDYEDEDEALHDE) form a disordered region. Over residues 429-446 (TADEEGDYEDEDEALHDE) the composition is skewed to acidic residues.

Belongs to the tubulin family. Dimer of alpha and beta chains. A typical microtubule is a hollow water-filled tube with an outer diameter of 25 nm and an inner diameter of 15 nM. Alpha-beta heterodimers associate head-to-tail to form protofilaments running lengthwise along the microtubule wall with the beta-tubulin subunit facing the microtubule plus end conferring a structural polarity. Microtubules usually have 13 protofilaments but different protofilament numbers can be found in some organisms and specialized cells. The cofactor is Mg(2+).

It localises to the cytoplasm. The protein localises to the cytoskeleton. Tubulin is the major constituent of microtubules, a cylinder consisting of laterally associated linear protofilaments composed of alpha- and beta-tubulin heterodimers. Microtubules grow by the addition of GTP-tubulin dimers to the microtubule end, where a stabilizing cap forms. Below the cap, tubulin dimers are in GDP-bound state, owing to GTPase activity of alpha-tubulin. The sequence is that of Tubulin beta-4 chain (TUBB4) from Eleusine indica (Goosegrass).